We begin with the raw amino-acid sequence, 459 residues long: Glutamyl-tRNA reductase (459 aa).

Substrate contacts are provided by residues 47–50 (TCNR), S140, 145–147 (EPQ), and Q151. The Nucleophile role is filled by C48. Position 220–225 (220–225 (AAGEMN)) interacts with NADP(+).

The protein belongs to the glutamyl-tRNA reductase family. Homodimer.

It carries out the reaction (S)-4-amino-5-oxopentanoate + tRNA(Glu) + NADP(+) = L-glutamyl-tRNA(Glu) + NADPH + H(+). It functions in the pathway porphyrin-containing compound metabolism; protoporphyrin-IX biosynthesis; 5-aminolevulinate from L-glutamyl-tRNA(Glu): step 1/2. Catalyzes the NADPH-dependent reduction of glutamyl-tRNA(Glu) to glutamate 1-semialdehyde (GSA). The sequence is that of Glutamyl-tRNA reductase from Psychrobacter arcticus (strain DSM 17307 / VKM B-2377 / 273-4).